A 486-amino-acid chain; its full sequence is Probable glucan endo-1,3-beta-glucosidase eglC (486 aa).

Positions 1 to 18 (MQLTQLLALALSLATSEA) are cleaved as a signal peptide. The N-linked (GlcNAc...) asparagine glycan is linked to Asn84. The Proton donor role is filled by Glu128. Asn183 carries N-linked (GlcNAc...) asparagine glycosylation. Glu239 serves as the catalytic Nucleophile. Residues Asn315, Asn386, Asn396, and Asn404 are each glycosylated (N-linked (GlcNAc...) asparagine). Residues 330–458 (AAAGGVAGGS…SSGAASPSST (129 aa)) are disordered. Composition is skewed to low complexity over residues 341 to 404 (GSAS…HGSN) and 413 to 424 (SVSNVSPSKSSS). Positions 430-442 (AATSMGASPSSVG) are enriched in polar residues. Residues 445–458 (GPSKSSGAASPSST) show a composition bias toward low complexity. Gly463 carries GPI-anchor amidated glycine lipidation. A propeptide spans 464 to 486 (AATSVSAPVVHVVLLALMMVIAA) (removed in mature form).

Belongs to the glycosyl hydrolase 17 family. In terms of processing, the GPI-anchor is attached to the protein in the endoplasmic reticulum and serves to target the protein to the cell surface. There, the glucosamine-inositol phospholipid moiety is cleaved off and the GPI-modified mannoprotein is covalently attached via its lipidless GPI glycan remnant to the 1,6-beta-glucan of the outer cell wall layer.

It localises to the cell membrane. Its subcellular location is the secreted. The protein resides in the cell wall. The enzyme catalyses Hydrolysis of (1-&gt;3)-beta-D-glucosidic linkages in (1-&gt;3)-beta-D-glucans.. Functionally, glucanases play a role in cell expansion during growth, in cell-cell fusion during mating, and in spore release during sporulation. This enzyme may be involved in beta-glucan degradation and also function biosynthetically as a transglycosylase. The chain is Probable glucan endo-1,3-beta-glucosidase eglC (eglC) from Aspergillus terreus (strain NIH 2624 / FGSC A1156).